Reading from the N-terminus, the 970-residue chain is Anaphase-promoting complex subunit 3 (970 aa).

4 TPR repeats span residues 35-68 (EDNLFKIAQIYYQMGKINQCLLILQQHPQITMIK), 74-107 (ALSNYDLGNIQEAESSIIKCCIYFEKYFQPNNNN), 142-175 (NNNSNSNNNENEYYGIYSDILCEFDDIVDINSIS), and 185-218 (GSVYYLMGLISKRKNQKEKAIKYLKKSVYTYPFL). The tract at residues 106–149 (NNNNNNNNNNNNNNNNNNNNNNNKDKCNNSNKNNDSNNNSNSNN) is disordered. Residues 274–300 (KVNNNNNNNNNNNNNINNNNSSNKNNE) are disordered. TPR repeat units follow at residues 319–353 (IKPNNFIKPPYHPNHRVGLTPSSFYDSSIHITPIN) and 361–394 (TNQQQQQQQQQQPQQPSQQNLQKYNNRYFVTPQT). 3 disordered regions span residues 358-379 (IQQTNQQQQQQQQQQPQQPSQQ), 414-525 (PIPM…TTTT), and 556-582 (SSLSDDDYDEENHHYQQHHHLHHHNKS). Positions 359–379 (QQTNQQQQQQQQQQPQQPSQQ) are enriched in low complexity. Positions 424–443 (SKGSQHPPSSNSQTPYTPST) are enriched in polar residues. Residues 446–460 (VHHHQKQQPHQHKKS) are compositionally biased toward basic residues. Over residues 500-525 (TSSTSKQQQQQQQTKQQTTTTTTTTT) the composition is skewed to low complexity. TPR repeat units follow at residues 546–580 (TEEFSLKSLSSSLSDDDYDEENHHYQQHHHLHHHN), 636–671 (LELFFILADSYRLLCLYLCKEAIESFKRLSEEQYRT), 672–705 (GWVLTKVAKAYHELIDYKEARSIFQEVSQMEPYR), 740–773 (PYSWVVVGNCFSLQRDHEAAIKLFRRAIQLDPDM), 775–807 (YAYTLCGHEYLANDELELALNAFRMAIRCDPRH), 808–841 (YNAFYGIGLIYYRQEKYNLAEYHFRKALSINESS), 843–876 (VLCCYLGMTLQHNPNKIQDGIDMLYRSIEIQPKN), 878–910 (FAKFKLAAFLFANQQYHHAIDQLLEFKEIEPKE), and 911–944 (TPIYILLGKCYKQLGELDKALDSLNTALDLDPKN). Over residues 570–580 (YQQHHHLHHHN) the composition is skewed to basic residues.

The protein belongs to the APC3/CDC27 family. The APC/C is composed of at least 13 subunits that stay tightly associated throughout the cell cycle: anapc1, anapc2, anapc3, anapc4, anapc5, anapc6, anapc7, anapc8, anapc10, anapc11, cdc20, cdc26 and cdh1.

The protein localises to the nucleus. Its pathway is protein modification; protein ubiquitination. Component of the anaphase promoting complex/cyclosome (APC/C), a cell cycle-regulated E3 ubiquitin-protein ligase complex that controls progression through mitosis and the G1 phase of the cell cycle. In Dictyostelium discoideum (Social amoeba), this protein is Anaphase-promoting complex subunit 3 (anapc3).